Here is a 639-residue protein sequence, read N- to C-terminus: RNA polymerase II elongation factor ELL2 (639 aa).

Disordered regions lie at residues 175–203 (DTVP…SVSQ), 291–326 (LNPS…SDFI), 378–416 (PSTH…SFSQ), and 439–513 (PSSA…EGCT). Over residues 291-317 (LNPSQNASTSRSESPLCSSKDAASSPQ) the composition is skewed to polar residues. The span at 378-401 (PSTHLPVSNPPQTVNSNSNSPSTP) shows a compositional bias: low complexity. Basic residues predominate over residues 457 to 469 (SHKKSKKKSKKHK). Positions 470 to 479 (EKDQIKKLDI) are enriched in basic and acidic residues. Residues 480–490 (ETMEEKEEDLQ) are compositionally biased toward acidic residues. Residues S501 and S579 each carry the phosphoserine modification. The 111-residue stretch at 525–635 (PDYLIKYIAI…LIGEFDQQQA (111 aa)) folds into the OCEL domain.

Belongs to the ELL/occludin family. As to quaternary structure, component of the super elongation complex (SEC), at least composed of EAF1, EAF2, CDK9, MLLT3/AF9, AFF (AFF1 or AFF4), the P-TEFb complex and ELL (ELL, ELL2 or ELL3). Component of the little elongation complex (LEC), at least composed of ELL (ELL, ELL2 or ELL3), ZC3H8, ICE1 and ICE2. Interacts with AFF4; the interaction is direct and leads to stabilize ELL2 and prevent ELL2 ubiquitination. Interacts with EAF1 and EAF2. Post-translationally, ubiquitinated by SIAH1, leading to its degradation by the proteasome. Interaction with AFF4 stabilizes ELL2 and prevents ELL2 ubiquitination.

It localises to the nucleus. Functionally, elongation factor component of the super elongation complex (SEC), a complex required to increase the catalytic rate of RNA polymerase II transcription by suppressing transient pausing by the polymerase at multiple sites along the DNA. Component of the little elongation complex (LEC), a complex required to regulate small nuclear RNA (snRNA) gene transcription by RNA polymerase II and III. Plays a role in immunoglobulin secretion in plasma cells: directs efficient alternative mRNA processing, influencing both proximal poly(A) site choice and exon skipping, as well as immunoglobulin heavy chain (IgH) alternative processing. Probably acts by regulating histone modifications accompanying transition from membrane-specific to secretory IgH mRNA expression. This chain is RNA polymerase II elongation factor ELL2 (Ell2), found in Mus musculus (Mouse).